The sequence spans 216 residues: Cytidylate kinase (216 aa).

Residue 7–15 (GPSGTGKST) coordinates ATP.

Belongs to the cytidylate kinase family. Type 1 subfamily.

Its subcellular location is the cytoplasm. The catalysed reaction is CMP + ATP = CDP + ADP. It catalyses the reaction dCMP + ATP = dCDP + ADP. The polypeptide is Cytidylate kinase (Chlamydia trachomatis serovar D (strain ATCC VR-885 / DSM 19411 / UW-3/Cx)).